The primary structure comprises 237 residues: UDP-2,3-diacylglucosamine hydrolase (237 aa).

5 residues coordinate Mn(2+): aspartate 9, histidine 11, aspartate 42, asparagine 80, and histidine 115. Residue 80 to 81 (NR) participates in substrate binding. Positions 123, 161, 165, 168, and 196 each coordinate substrate. Residues histidine 196 and histidine 198 each coordinate Mn(2+).

It belongs to the LpxH family. Requires Mn(2+) as cofactor.

It localises to the cell inner membrane. It carries out the reaction UDP-2-N,3-O-bis[(3R)-3-hydroxytetradecanoyl]-alpha-D-glucosamine + H2O = 2-N,3-O-bis[(3R)-3-hydroxytetradecanoyl]-alpha-D-glucosaminyl 1-phosphate + UMP + 2 H(+). The protein operates within glycolipid biosynthesis; lipid IV(A) biosynthesis; lipid IV(A) from (3R)-3-hydroxytetradecanoyl-[acyl-carrier-protein] and UDP-N-acetyl-alpha-D-glucosamine: step 4/6. Its function is as follows. Hydrolyzes the pyrophosphate bond of UDP-2,3-diacylglucosamine to yield 2,3-diacylglucosamine 1-phosphate (lipid X) and UMP by catalyzing the attack of water at the alpha-P atom. Involved in the biosynthesis of lipid A, a phosphorylated glycolipid that anchors the lipopolysaccharide to the outer membrane of the cell. The sequence is that of UDP-2,3-diacylglucosamine hydrolase from Haemophilus influenzae (strain PittGG).